We begin with the raw amino-acid sequence, 159 residues long: Cyclic pyranopterin monophosphate synthase (159 aa).

Residues 75 to 77 (LCH) and 113 to 114 (ME) contribute to the substrate site. The active site involves D128.

Belongs to the MoaC family. Homohexamer; trimer of dimers.

It catalyses the reaction (8S)-3',8-cyclo-7,8-dihydroguanosine 5'-triphosphate = cyclic pyranopterin phosphate + diphosphate. It functions in the pathway cofactor biosynthesis; molybdopterin biosynthesis. Functionally, catalyzes the conversion of (8S)-3',8-cyclo-7,8-dihydroguanosine 5'-triphosphate to cyclic pyranopterin monophosphate (cPMP). This chain is Cyclic pyranopterin monophosphate synthase, found in Burkholderia multivorans (strain ATCC 17616 / 249).